The following is a 336-amino-acid chain: Anthranilate phosphoribosyltransferase (336 aa).

5-phospho-alpha-D-ribose 1-diphosphate is bound by residues glycine 81, 84 to 85 (GD), serine 89, 91 to 94 (NIST), 109 to 117 (KHGNRGLSS), and alanine 121. Anthranilate is bound at residue glycine 81. Position 93 (serine 93) interacts with Mg(2+). Asparagine 112 contributes to the anthranilate binding site. Position 167 (arginine 167) interacts with anthranilate. Positions 225 and 226 each coordinate Mg(2+).

This sequence belongs to the anthranilate phosphoribosyltransferase family. In terms of assembly, homodimer. Mg(2+) is required as a cofactor.

The catalysed reaction is N-(5-phospho-beta-D-ribosyl)anthranilate + diphosphate = 5-phospho-alpha-D-ribose 1-diphosphate + anthranilate. The protein operates within amino-acid biosynthesis; L-tryptophan biosynthesis; L-tryptophan from chorismate: step 2/5. Catalyzes the transfer of the phosphoribosyl group of 5-phosphorylribose-1-pyrophosphate (PRPP) to anthranilate to yield N-(5'-phosphoribosyl)-anthranilate (PRA). This Mesorhizobium japonicum (strain LMG 29417 / CECT 9101 / MAFF 303099) (Mesorhizobium loti (strain MAFF 303099)) protein is Anthranilate phosphoribosyltransferase.